The sequence spans 3164 residues: Large tegument protein deneddylase (3164 aa).

Positions 1-273 (MGGGNNTNPG…SETYLQDEAF (273 aa)) are deubiquitination activity. The Peptidase C76 domain maps to 45-263 (VVTGARNQFA…TAAALHLYGA (219 aa)). Active-site residues include C65, D197, and H199. The segment at 289-508 (AGLGEPCVGV…GEDDGPTVPA (220 aa)) is disordered. Residues 308–321 (GPHPPTAAQSPPPT) are compositionally biased toward pro residues. Positions 343–353 (PEAKRPNRAPD) are enriched in basic and acidic residues. Pro residues predominate over residues 365-390 (PTDPPSADPPSADPPSAIPPPPPSAP). A compositionally biased stretch (basic residues) spans 416 to 432 (GRHRARYSAGLPKRRRP). The nuclear localization signal stretch occupies residues 426-432 (LPKRRRP). The segment at 579–609 (LELCVIFFFERVLAFLIENGARTHTQAGVAG) is interaction with inner tegument protein. The interaction with UL37 stretch occupies residues 579 to 609 (LELCVIFFFERVLAFLIENGARTHTQAGVAG). Disordered stretches follow at residues 2296-2318 (QTLS…LYRP), 2518-2552 (HPVY…LGPG), and 2583-3020 (ASDD…SLSG). Residues 2653–2667 (QSSPAPPDATAPRPP) show a composition bias toward pro residues. The segment covering 2668-2680 (ASSRASAASSSGS) has biased composition (low complexity). Positions 2681–2690 (RARRHRRARS) are enriched in basic residues. Pro residues predominate over residues 2722 to 2732 (PPAPPKPPEPA). Low complexity predominate over residues 2834 to 2843 (PAEPTSSSPA). Residues 2844–2866 (GPSPPPPAVQPVAPPPTSGPPPT) show a composition bias toward pro residues. Positions 2886–2897 (TRQPVATPTTSA) are enriched in polar residues. 35 repeat units span residues 2911–2912 (PQ), 2913–2914 (PQ), 2915–2916 (PQ), 2917–2918 (PQ), 2919–2920 (PQ), 2921–2922 (PQ), 2923–2924 (PQ), 2925–2926 (PQ), 2927–2928 (PQ), 2929–2930 (PQ), 2931–2932 (PQ), 2933–2934 (PQ), 2935–2936 (PQ), 2937–2938 (PQ), 2939–2940 (PQ), 2941–2942 (PQ), 2943–2944 (PQ), 2945–2946 (PQ), 2947–2948 (PQ), 2949–2950 (PQ), 2951–2952 (PQ), 2953–2954 (PQ), 2955–2956 (PQ), 2957–2958 (PQ), 2959–2960 (PQ), 2961–2962 (PQ), 2963–2964 (PQ), 2965–2966 (PQ), 2967–2968 (PQ), 2969–2970 (PQ), 2971–2972 (PQ), 2973–2974 (PQ), 2975–2976 (PQ), 2977–2978 (PQ), and 2979–2980 (PQ). The tract at residues 2911 to 2980 (PQPQPQPQPQ…PQPQPQPQPQ (70 aa)) is 35 X 2 AA tandem repeats of P-Q. Residues 2912–2978 (QPQPQPQPQP…PQPQPQPQPQ (67 aa)) show a composition bias toward pro residues. The span at 2999–3014 (NRPSVPASASSTNPRT) shows a compositional bias: polar residues.

Belongs to the herpesviridae large tegument protein family. As to quaternary structure, interacts with host CUL1 and CUL4A; these interactions inhibit the E3 ligase activity of cullins. Interacts with inner tegument protein. Interacts with capsid vertex specific component CVC2. Interacts with the major capsid protein/MCP. Interacts with VP16; this interaction is important for outer tegument association to the capsid. May form homodimers. Post-translationally, proteolytically processed, possibly into several polypeptides. Enzymatic activity is only detectable following cleavage of the UL36 protein, which occurs late during viral replication.

Its subcellular location is the virion tegument. It localises to the host cytoplasm. It is found in the host nucleus. The catalysed reaction is Thiol-dependent hydrolysis of ester, thioester, amide, peptide and isopeptide bonds formed by the C-terminal Gly of ubiquitin (a 76-residue protein attached to proteins as an intracellular targeting signal).. Large tegument protein that plays multiple roles in the viral cycle. During viral entry, remains associated with the capsid while most of the tegument is detached and participates in the capsid transport toward the host nucleus. Plays a role in the routing of the capsid at the nuclear pore complex and subsequent uncoating. Within the host nucleus, acts as a deneddylase and promotes the degradation of nuclear CRLs (cullin-RING ubiquitin ligases) and thereby stabilizes nuclear CRL substrates, while cytoplasmic CRLs remain unaffected. These modifications prevent host cell cycle S-phase progression and create a favorable environment allowing efficient viral genome replication. Participates later in the secondary envelopment of capsids. Indeed, plays a linker role for the association of the outer viral tegument to the capsids together with the inner tegument protein. This chain is Large tegument protein deneddylase, found in Human herpesvirus 1 (strain 17) (HHV-1).